The sequence spans 195 residues: ATP-dependent Clp protease proteolytic subunit (195 aa).

Catalysis depends on Ser97, which acts as the Nucleophile. His122 is a catalytic residue.

This sequence belongs to the peptidase S14 family. As to quaternary structure, fourteen ClpP subunits assemble into 2 heptameric rings which stack back to back to give a disk-like structure with a central cavity, resembling the structure of eukaryotic proteasomes.

It is found in the cytoplasm. The catalysed reaction is Hydrolysis of proteins to small peptides in the presence of ATP and magnesium. alpha-casein is the usual test substrate. In the absence of ATP, only oligopeptides shorter than five residues are hydrolyzed (such as succinyl-Leu-Tyr-|-NHMec, and Leu-Tyr-Leu-|-Tyr-Trp, in which cleavage of the -Tyr-|-Leu- and -Tyr-|-Trp bonds also occurs).. Functionally, cleaves peptides in various proteins in a process that requires ATP hydrolysis. Has a chymotrypsin-like activity. Plays a major role in the degradation of misfolded proteins. The chain is ATP-dependent Clp protease proteolytic subunit from Campylobacter hominis (strain ATCC BAA-381 / DSM 21671 / CCUG 45161 / LMG 19568 / NCTC 13146 / CH001A).